A 367-amino-acid chain; its full sequence is Dual specificity protein phosphatase 1 (367 aa).

Residues 20-137 (RAAQCLLLDC…FSASCPELCS (118 aa)) enclose the Rhodanese domain. The region spanning 173–314 (GPVEILSFLY…LLQFESQVLA (142 aa)) is the Tyrosine-protein phosphatase domain. Cys-258 acts as the Phosphocysteine intermediate in catalysis. Phosphoserine; by MAPK1 and MAPK3 is present on residues Ser-359 and Ser-364.

It belongs to the protein-tyrosine phosphatase family. Non-receptor class dual specificity subfamily. Post-translationally, phosphorylation at Ser-359 and Ser-364 by MAPK1/ERK2 and MAPK3/ERK1 reduces its rate of degradation. 'Lys-48'-linked polyubiquitinated by NEURL3, leading to proteasomal degradation. Brain. High level expression seen in the cingulate gyrus within the retrospinal cortex, ventral and medial divisions of the anterior thalamus and the medial geniculate nucleus. Expressed at moderate levels in the parietal and temporal cortex. Expressed in the cerebellum.

The protein localises to the nucleus. The catalysed reaction is O-phospho-L-tyrosyl-[protein] + H2O = L-tyrosyl-[protein] + phosphate. It catalyses the reaction O-phospho-L-seryl-[protein] + H2O = L-seryl-[protein] + phosphate. The enzyme catalyses O-phospho-L-threonyl-[protein] + H2O = L-threonyl-[protein] + phosphate. Dual specificity phosphatase that dephosphorylates MAP kinase MAPK1/ERK2 on both 'Thr-183' and 'Tyr-185', regulating its activity during the meiotic cell cycle. This chain is Dual specificity protein phosphatase 1, found in Rattus norvegicus (Rat).